A 457-amino-acid polypeptide reads, in one-letter code: Serine--tRNA ligase (457 aa).

252–254 is a binding site for L-serine; the sequence is TAE. ATP is bound by residues 283–285 and Val-299; that span reads RKE. Glu-306 contributes to the L-serine binding site. An ATP-binding site is contributed by 370-373; it reads EVVS. Residue Thr-406 participates in L-serine binding.

The protein belongs to the class-II aminoacyl-tRNA synthetase family. Type-1 seryl-tRNA synthetase subfamily. In terms of assembly, homodimer. The tRNA molecule binds across the dimer.

The protein localises to the cytoplasm. The enzyme catalyses tRNA(Ser) + L-serine + ATP = L-seryl-tRNA(Ser) + AMP + diphosphate + H(+). The catalysed reaction is tRNA(Sec) + L-serine + ATP = L-seryl-tRNA(Sec) + AMP + diphosphate + H(+). The protein operates within aminoacyl-tRNA biosynthesis; selenocysteinyl-tRNA(Sec) biosynthesis; L-seryl-tRNA(Sec) from L-serine and tRNA(Sec): step 1/1. Catalyzes the attachment of serine to tRNA(Ser). Is also able to aminoacylate tRNA(Sec) with serine, to form the misacylated tRNA L-seryl-tRNA(Sec), which will be further converted into selenocysteinyl-tRNA(Sec). The polypeptide is Serine--tRNA ligase (Thermococcus onnurineus (strain NA1)).